We begin with the raw amino-acid sequence, 293 residues long: Actin-related protein 2/3 complex subunit 2 (293 aa).

Belongs to the ARPC2 family. In terms of assembly, component of the Arp2/3 complex composed of arpB/Arp2, arpC/Arp3, arcA/p41-arc, arcB/p34-arc, arcC/p21-arc, arcD/p20-arc and arcE/p16-arc. Interacts with carmil (via the region between the LRR domain and COOH-terminal proline-rich domain); carmil is required for Arp2/3-dependent actin nucleation. Arp2/3 complex, MyoB, MyoC, and the alpha and beta subunits of capping protein all form a larger complex with carmil.

The protein resides in the cytoplasm. Its subcellular location is the cytoskeleton. It localises to the cell projection. It is found in the cytosol. The protein localises to the cell cortex. The protein resides in the pseudopodium. Its function is as follows. Functions as a component of the Arp2/3 complex which is involved in regulation of actin polymerization and together with an activating nucleation-promoting factor (NPF) mediates the formation of branched actin networks. Seems to contact the pointed end of the daughter actin filament. The Arp2/3 complex is involved in organizing the actin system in cell motility and chemotaxis, in phagocytosis and macropinocytosis, at late steps of endosome processing, and in mitosis. In concert with a group of other proteins, the Arp2/3 complex plays a general role in the rapid activation and adaptation of the actin system to its multiple functions. The polypeptide is Actin-related protein 2/3 complex subunit 2 (arcB) (Dictyostelium discoideum (Social amoeba)).